Here is a 545-residue protein sequence, read N- to C-terminus: Toxin BC_0920 (545 aa).

The region spanning 1-217 (MSLNMYLGEV…ARQAANSIEE (217 aa)) is the LXG domain.

It in the N-terminal section; belongs to the LXG family. The protein in the C-terminal section; belongs to the bacterial EndoU family. In terms of assembly, probably interacts with cognate immunity protein BC_0921. The interaction inhibits the toxic activity of BC_0921.

The protein resides in the secreted. Functionally, toxic component of an LXG toxin-immunity module. The C-terminus (residues 322-545) has RNase activity in E.coli which is neutralized by cognate immunity protein BC_0921, but not by immunity proteins specific to other toxins with the LXG domain. Degrades 5S rRNA and several tRNAs in vitro; cleavage is endonucleolytic within the anticodon loop for tRNA(GAU-Ile) and tRNA(UUC-Glu) but total for 5S rRNA and at least one other tRNA. RNase activity is suppressed by cognate immunity protein BC_0921. This Bacillus cereus (strain ATCC 14579 / DSM 31 / CCUG 7414 / JCM 2152 / NBRC 15305 / NCIMB 9373 / NCTC 2599 / NRRL B-3711) protein is Toxin BC_0920.